Here is a 178-residue protein sequence, read N- to C-terminus: ATP synthase subunit delta (178 aa).

It belongs to the ATPase delta chain family. In terms of assembly, F-type ATPases have 2 components, F(1) - the catalytic core - and F(0) - the membrane proton channel. F(1) has five subunits: alpha(3), beta(3), gamma(1), delta(1), epsilon(1). F(0) has three main subunits: a(1), b(2) and c(10-14). The alpha and beta chains form an alternating ring which encloses part of the gamma chain. F(1) is attached to F(0) by a central stalk formed by the gamma and epsilon chains, while a peripheral stalk is formed by the delta and b chains.

It localises to the cell inner membrane. F(1)F(0) ATP synthase produces ATP from ADP in the presence of a proton or sodium gradient. F-type ATPases consist of two structural domains, F(1) containing the extramembraneous catalytic core and F(0) containing the membrane proton channel, linked together by a central stalk and a peripheral stalk. During catalysis, ATP synthesis in the catalytic domain of F(1) is coupled via a rotary mechanism of the central stalk subunits to proton translocation. Functionally, this protein is part of the stalk that links CF(0) to CF(1). It either transmits conformational changes from CF(0) to CF(1) or is implicated in proton conduction. This is ATP synthase subunit delta from Polynucleobacter necessarius subsp. necessarius (strain STIR1).